A 265-amino-acid polypeptide reads, in one-letter code: Mlc titration factor A (265 aa).

Positions 111, 148, 152, and 211 each coordinate Zn(2+).

It belongs to the MtfA family. Interacts with Mlc. Requires Zn(2+) as cofactor.

The protein resides in the cytoplasm. Its function is as follows. Involved in the modulation of the activity of the glucose-phosphotransferase system (glucose-PTS). Interacts with the transcriptional repressor Mlc, preventing its interaction with DNA and leading to the modulation of expression of genes regulated by Mlc, including ptsG, which encodes the PTS system glucose-specific EIICB component. Functionally, shows zinc-dependent metallopeptidase activity. The chain is Mlc titration factor A from Escherichia coli O6:K15:H31 (strain 536 / UPEC).